The primary structure comprises 66 residues: Large ribosomal subunit protein bL33B (66 aa).

It belongs to the bacterial ribosomal protein bL33 family.

The sequence is that of Large ribosomal subunit protein bL33B from Synechococcus sp. (strain CC9605).